A 28-amino-acid polypeptide reads, in one-letter code: Humanin-like 2 (28 aa).

It belongs to the humanin family. Highly expressed in testis. Also expressed in kidney, heart, skeletal muscles and brain.

The protein localises to the secreted. It localises to the cytoplasm. In terms of biological role, plays a role as a neuroprotective and antiapoptotic factor. In Homo sapiens (Human), this protein is Humanin-like 2.